The sequence spans 452 residues: Tubulin beta-2 chain (452 aa).

8 residues coordinate GTP: Q11, E72, S141, G145, T146, G147, N207, and N229. Residue E72 coordinates Mg(2+). The tract at residues 414 to 452 (AESNMNDPVAEYQQYQDATADDEEEYDDEAADDHHQYES) is disordered. A compositionally biased stretch (acidic residues) spans 432–444 (TADDEEEYDDEAA).

This sequence belongs to the tubulin family. As to quaternary structure, dimer of alpha and beta chains. A typical microtubule is a hollow water-filled tube with an outer diameter of 25 nm and an inner diameter of 15 nM. Alpha-beta heterodimers associate head-to-tail to form protofilaments running lengthwise along the microtubule wall with the beta-tubulin subunit facing the microtubule plus end conferring a structural polarity. Microtubules usually have 13 protofilaments but different protofilament numbers can be found in some organisms and specialized cells. Mg(2+) is required as a cofactor.

The protein localises to the cytoplasm. It localises to the cytoskeleton. Tubulin is the major constituent of microtubules, a cylinder consisting of laterally associated linear protofilaments composed of alpha- and beta-tubulin heterodimers. Microtubules grow by the addition of GTP-tubulin dimers to the microtubule end, where a stabilizing cap forms. Below the cap, tubulin dimers are in GDP-bound state, owing to GTPase activity of alpha-tubulin. The sequence is that of Tubulin beta-2 chain (TUBB2) from Solanum tuberosum (Potato).